Consider the following 105-residue polypeptide: Large ribosomal subunit protein uL24 (105 aa).

This sequence belongs to the universal ribosomal protein uL24 family. As to quaternary structure, part of the 50S ribosomal subunit.

In terms of biological role, one of two assembly initiator proteins, it binds directly to the 5'-end of the 23S rRNA, where it nucleates assembly of the 50S subunit. One of the proteins that surrounds the polypeptide exit tunnel on the outside of the subunit. The sequence is that of Large ribosomal subunit protein uL24 from Mycolicibacterium vanbaalenii (strain DSM 7251 / JCM 13017 / BCRC 16820 / KCTC 9966 / NRRL B-24157 / PYR-1) (Mycobacterium vanbaalenii).